The following is a 318-amino-acid chain: Mitochondrial thiamine pyrophosphate carrier (318 aa).

Solcar repeat units follow at residues 13–106, 116–202, and 214–309; these read NSKL…LTEL, HQFS…LKRA, and TGNL…FCNL. The next 5 membrane-spanning stretches (helical) occupy residues 19 to 39, 87 to 107, 122 to 142, 173 to 193, and 220 to 240; these read AVAGSVSGFVTRALISPLDVI, ILSIGYGAVQFLAFEELTELL, FVCGGLSAGTATLTVHPVDVL, VFYKGLTPTVIAIFPYAGLQF, and LLCGCGSGVISKTFTYPLDLI. The Substrate recognition signature appears at 241–246; it reads KKRLQV. A helical transmembrane segment spans residues 293–313; sequence ALSTGFMFFWYELFCNLFHCI.

Belongs to the mitochondrial carrier (TC 2.A.29) family.

The protein localises to the mitochondrion membrane. The enzyme catalyses thiamine phosphate(out) + thiamine diphosphate(in) = thiamine phosphate(in) + thiamine diphosphate(out). Its function is as follows. Mitochondrial transporter mediating uptake of thiamine diphosphate into mitochondria. It is not clear if the antiporter activity is affected by the membrane potential or by the proton electrochemical gradient. This is Mitochondrial thiamine pyrophosphate carrier (Slc25a19) from Mus musculus (Mouse).